The chain runs to 229 residues: Potassium/proton antiporter CemA (229 aa).

3 consecutive transmembrane segments (helical) span residues 7-27, 107-127, and 189-209; these read FTPL…SLLF, ILHF…SIFG, and IISG…KYWI.

The protein belongs to the CemA family.

Its subcellular location is the plastid. The protein localises to the chloroplast inner membrane. It carries out the reaction K(+)(in) + H(+)(out) = K(+)(out) + H(+)(in). In terms of biological role, contributes to K(+)/H(+) antiport activity by supporting proton efflux to control proton extrusion and homeostasis in chloroplasts in a light-dependent manner to modulate photosynthesis. Prevents excessive induction of non-photochemical quenching (NPQ) under continuous-light conditions. Indirectly promotes efficient inorganic carbon uptake into chloroplasts. The polypeptide is Potassium/proton antiporter CemA (Guizotia abyssinica (Niger)).